The following is a 306-amino-acid chain: Protein YIPF1 (306 aa).

At 1–119 (MAAVDDLQFE…VRLYIRSNPD (119 aa)) the chain is on the cytoplasmic side. The interval 14–62 (NAATSLTANPDATTVNIEDPGETPKHQSGSPRGSGREEDDELLGNDDSD) is disordered. Over residues 15–29 (AATSLTANPDATTVN) the composition is skewed to polar residues. Acidic residues predominate over residues 50–59 (EEDDELLGND). The chain crosses the membrane as a helical span at residues 120-140 (LYGPFWICATLVFAIAISGNL). The Lumenal segment spans residues 141–162 (SNFLIHLGEKTYRYVPEFRKVS). The helical transmembrane segment at 163 to 183 (IAATTIYAYAWLVPLALWGFL) threads the bilayer. Topologically, residues 184-200 (MWRNSKVMNIVSYSFLE) are cytoplasmic. A helical transmembrane segment spans residues 201-221 (IVCVYGYSLFIYIPTAILWII). The Lumenal segment spans residues 222–227 (PQKAVR). A helical membrane pass occupies residues 228–248 (WILVMIALGISGSVLAMTFWP). Over 249-256 (AVREDNRR) the chain is Cytoplasmic. A helical membrane pass occupies residues 257 to 277 (VALATIVTIVLLHMLLSVGCL). Over 278 to 306 (AYFFDAPEMDHLPTTTATPNQTVAAAKSS) the chain is Lumenal. N297 is a glycosylation site (N-linked (GlcNAc...) asparagine).

This sequence belongs to the YIP1 family. As to quaternary structure, interacts with YIPF6; this interaction may stabilize YIPF1. May also form a ternary complex with YIPF2 and YIPF6.

The protein resides in the golgi apparatus. It localises to the cis-Golgi network membrane. The protein localises to the trans-Golgi network membrane. It is found in the late endosome membrane. The sequence is that of Protein YIPF1 (YIPF1) from Pongo abelii (Sumatran orangutan).